The primary structure comprises 170 residues: Large ribosomal subunit protein uL11 (170 aa).

This sequence belongs to the universal ribosomal protein uL11 family. As to quaternary structure, part of the ribosomal stalk of the 50S ribosomal subunit. Interacts with L10 and the large rRNA to form the base of the stalk. L10 forms an elongated spine to which L12 dimers bind in a sequential fashion forming a multimeric L10(L12)X complex.

In terms of biological role, forms part of the ribosomal stalk which helps the ribosome interact with GTP-bound translation factors. This chain is Large ribosomal subunit protein uL11, found in Sulfolobus acidocaldarius (strain ATCC 33909 / DSM 639 / JCM 8929 / NBRC 15157 / NCIMB 11770).